The chain runs to 406 residues: Putative odorant receptor 65b (406 aa).

The Cytoplasmic segment spans residues methionine 1–lysine 55. A helical membrane pass occupies residues tryptophan 56–threonine 76. Residues glutamate 77–aspartate 88 lie on the Extracellular side of the membrane. A helical membrane pass occupies residues leucine 89–glycine 109. The Cytoplasmic portion of the chain corresponds to aspartate 110–valine 144. Residues methionine 145 to isoleucine 165 traverse the membrane as a helical segment. At threonine 166–glutamate 218 the chain is on the extracellular side. Residues glycine 219–leucine 239 traverse the membrane as a helical segment. The Cytoplasmic segment spans residues arginine 240–aspartate 275. A helical membrane pass occupies residues valine 276 to valine 296. The Extracellular portion of the chain corresponds to leucine 297 to lysine 307. The chain crosses the membrane as a helical span at residues valine 308 to tyrosine 328. At cysteine 329–serine 381 the chain is on the cytoplasmic side. The helical transmembrane segment at phenylalanine 382–leucine 402 threads the bilayer. The Extracellular segment spans residues lysine 403 to aspartate 406.

This sequence belongs to the insect chemoreceptor superfamily. Heteromeric odorant receptor channel (TC 1.A.69) family. Or49a subfamily. In terms of assembly, interacts with Orco. Complexes exist early in the endomembrane system in olfactory sensory neurons (OSNs), coupling these complexes to the conserved ciliary trafficking pathway.

Its subcellular location is the cell membrane. In terms of biological role, odorant receptor which mediates acceptance or avoidance behavior, depending on its substrates. The odorant receptor repertoire encodes a large collection of odor stimuli that vary widely in identity, intensity, and duration. May form a complex with Orco to form odorant-sensing units, providing sensitive and prolonged odorant signaling and calcium permeability. This chain is Putative odorant receptor 65b (Or65b), found in Drosophila melanogaster (Fruit fly).